Reading from the N-terminus, the 279-residue chain is Thymidylate synthase (279 aa).

141–142 (RR) provides a ligand contact to dUMP. The Nucleophile role is filled by Cys-161. DUMP is bound by residues 181–184 (RSND), Asn-192, and 222–224 (HVY). Residue Asp-184 coordinates (6R)-5,10-methylene-5,6,7,8-tetrahydrofolate. Ala-278 is a binding site for (6R)-5,10-methylene-5,6,7,8-tetrahydrofolate.

Belongs to the thymidylate synthase family. As to quaternary structure, homodimer.

It catalyses the reaction dUMP + (6R)-5,10-methylene-5,6,7,8-tetrahydrofolate = 7,8-dihydrofolate + dTMP. Its pathway is pyrimidine metabolism; dTTP biosynthesis. Provides the sole de novo source of dTMP for DNA biosynthesis. The protein is Thymidylate synthase (thyP3) of Bacillus subtilis (Bacteriophage phi-3T).